The sequence spans 330 residues: Aspartate--ammonia ligase (330 aa).

It belongs to the class-II aminoacyl-tRNA synthetase family. AsnA subfamily. In terms of assembly, homodimer.

The protein resides in the cytoplasm. The catalysed reaction is L-aspartate + NH4(+) + ATP = L-asparagine + AMP + diphosphate + H(+). It functions in the pathway amino-acid biosynthesis; L-asparagine biosynthesis; L-asparagine from L-aspartate (ammonia route): step 1/1. This Salmonella typhi protein is Aspartate--ammonia ligase.